A 542-amino-acid polypeptide reads, in one-letter code: Chaperonin GroEL (542 aa).

ATP is bound by residues 30–33 (TLGP), Lys51, 87–91 (DGTTT), Gly415, 480–482 (NAA), and Asp496.

The protein belongs to the chaperonin (HSP60) family. As to quaternary structure, forms a cylinder of 14 subunits composed of two heptameric rings stacked back-to-back. Interacts with the co-chaperonin GroES.

Its subcellular location is the cytoplasm. It carries out the reaction ATP + H2O + a folded polypeptide = ADP + phosphate + an unfolded polypeptide.. In terms of biological role, together with its co-chaperonin GroES, plays an essential role in assisting protein folding. The GroEL-GroES system forms a nano-cage that allows encapsulation of the non-native substrate proteins and provides a physical environment optimized to promote and accelerate protein folding. The protein is Chaperonin GroEL of Tremblaya princeps.